The following is a 294-amino-acid chain: Phosphatidylserine decarboxylase proenzyme (294 aa).

Catalysis depends on charge relay system; for autoendoproteolytic cleavage activity residues Asp88, His145, and Ser248. Ser248 functions as the Schiff-base intermediate with substrate; via pyruvic acid; for decarboxylase activity in the catalytic mechanism. Ser248 is modified (pyruvic acid (Ser); by autocatalysis).

The protein belongs to the phosphatidylserine decarboxylase family. PSD-B subfamily. Prokaryotic type I sub-subfamily. In terms of assembly, heterodimer of a large membrane-associated beta subunit and a small pyruvoyl-containing alpha subunit. Pyruvate is required as a cofactor. Is synthesized initially as an inactive proenzyme. Formation of the active enzyme involves a self-maturation process in which the active site pyruvoyl group is generated from an internal serine residue via an autocatalytic post-translational modification. Two non-identical subunits are generated from the proenzyme in this reaction, and the pyruvate is formed at the N-terminus of the alpha chain, which is derived from the carboxyl end of the proenzyme. The autoendoproteolytic cleavage occurs by a canonical serine protease mechanism, in which the side chain hydroxyl group of the serine supplies its oxygen atom to form the C-terminus of the beta chain, while the remainder of the serine residue undergoes an oxidative deamination to produce ammonia and the pyruvoyl prosthetic group on the alpha chain. During this reaction, the Ser that is part of the protease active site of the proenzyme becomes the pyruvoyl prosthetic group, which constitutes an essential element of the active site of the mature decarboxylase.

Its subcellular location is the cell membrane. The catalysed reaction is a 1,2-diacyl-sn-glycero-3-phospho-L-serine + H(+) = a 1,2-diacyl-sn-glycero-3-phosphoethanolamine + CO2. It functions in the pathway phospholipid metabolism; phosphatidylethanolamine biosynthesis; phosphatidylethanolamine from CDP-diacylglycerol: step 2/2. Its function is as follows. Catalyzes the formation of phosphatidylethanolamine (PtdEtn) from phosphatidylserine (PtdSer). This Herminiimonas arsenicoxydans protein is Phosphatidylserine decarboxylase proenzyme.